The primary structure comprises 194 residues: uncharacterized protein (194 aa).

Positions Gln77 to Thr92 are enriched in polar residues. The tract at residues Gln77–Asp96 is disordered. A helical transmembrane segment spans residues Phe169–Leu189.

The protein localises to the host membrane. Its subcellular location is the virion. This is an uncharacterized protein from Acanthamoeba polyphaga (Amoeba).